The primary structure comprises 609 residues: Probable translation initiation factor IF-2 (609 aa).

The region spanning 12–230 is the tr-type G domain; sequence LRQPIVAVLG…VLAGLAQRYM (219 aa). The tract at residues 21-28 is G1; the sequence is GHVDHGKT. A GTP-binding site is contributed by 21 to 28; sequence GHVDHGKT. The tract at residues 46–50 is G2; that stretch reads QITQH. A G3 region spans residues 86–89; sequence DTPG. Residues 86–90 and 140–143 each bind GTP; these read DTPGH and NKID. Positions 140–143 are G4; that stretch reads NKID. Residues 208–210 are G5; that stretch reads SAK.

The protein belongs to the TRAFAC class translation factor GTPase superfamily. Classic translation factor GTPase family. IF-2 subfamily.

Function in general translation initiation by promoting the binding of the formylmethionine-tRNA to ribosomes. Seems to function along with eIF-2. This chain is Probable translation initiation factor IF-2, found in Ignicoccus hospitalis (strain KIN4/I / DSM 18386 / JCM 14125).